The sequence spans 205 residues: Thymidylate kinase (205 aa).

10-17 (GIDGAGKS) serves as a coordination point for ATP.

The protein belongs to the thymidylate kinase family.

It carries out the reaction dTMP + ATP = dTDP + ADP. Functionally, phosphorylation of dTMP to form dTDP in both de novo and salvage pathways of dTTP synthesis. The sequence is that of Thymidylate kinase from Ralstonia nicotianae (strain ATCC BAA-1114 / GMI1000) (Ralstonia solanacearum).